A 1558-amino-acid polypeptide reads, in one-letter code: Eukaryotic translation initiation factor 2-alpha kinase 1 (1558 aa).

Residues 429–789 (FFEEKILGCG…AYNLLHESVL (361 aa)) enclose the Protein kinase domain. ATP contacts are provided by residues 435-443 (LGCGGFGYV) and Lys-458. Residue Asp-660 is the Proton acceptor of the active site. Residues 1014–1033 (GTSTNNNNNNNNNNMGNNNI) form a disordered region.

The protein belongs to the protein kinase superfamily. Ser/Thr protein kinase family. GCN2 subfamily. Post-translationally, auto-phosphorylated.

It catalyses the reaction L-seryl-[protein] + ATP = O-phospho-L-seryl-[protein] + ADP + H(+). The enzyme catalyses L-threonyl-[protein] + ATP = O-phospho-L-threonyl-[protein] + ADP + H(+). Its function is as follows. In blood stage parasites, phosphorylates translation factor eIF2alpha in response to amino acid starvation. During the asexual blood stage, involved in the response to the host hormone melatonin which is used by the parasite to modulate its cell cycle. This is Eukaryotic translation initiation factor 2-alpha kinase 1 from Plasmodium falciparum (isolate 3D7).